Consider the following 446-residue polypeptide: MMDVQTVRRGNAVQSLMSKLILPLVMAVAFALPARAALQIDITQGNVDPLPIAITDFVGEGSVGADMSAVISNNLERSGLFRPLPKASFIEKVSDINVQPRFGDWRVINSQALVTGQTRMEADGRLRVEFRLWDVLGEQQLTGLQFFTTPDNWRRVAHLISDAIYKRLTGEDGYFDTRIVYVSETGPKNARVKRLTIMDQDGHNPRMLTRGNELVLTPRFSPNSQEITYLAYRNNQPRVYVLDIETGQQEVVGEFPGMTFAPRFSPDGQRIIMSLQRGGNSDIYTMDLRSRQVVRLTNTAAIDTAPSYSPDGRQITFESDRGGSQQIYVMDASGSNQRRISFGQGSYATPVWSPRGDLIAFTKITGGRFVIGVMRPDGTGERVLTDGFHNEGPTWAPNGRVLMFFRETRGAQGGPSLWSVDVTGYNERPSPTPTFASDPAWSPRIQ.

A signal peptide spans 1 to 36 (MMDVQTVRRGNAVQSLMSKLILPLVMAVAFALPARA). Residues 424–446 (GYNERPSPTPTFASDPAWSPRIQ) form a disordered region.

It belongs to the TolB family. As to quaternary structure, the Tol-Pal system is composed of five core proteins: the inner membrane proteins TolA, TolQ and TolR, the periplasmic protein TolB and the outer membrane protein Pal. They form a network linking the inner and outer membranes and the peptidoglycan layer.

Its subcellular location is the periplasm. Functionally, part of the Tol-Pal system, which plays a role in outer membrane invagination during cell division and is important for maintaining outer membrane integrity. The sequence is that of Tol-Pal system protein TolB from Parvibaculum lavamentivorans (strain DS-1 / DSM 13023 / NCIMB 13966).